The primary structure comprises 276 residues: NAD-capped RNA hydrolase NudC (276 aa).

Arg82 contributes to the substrate binding site. Zn(2+) is bound by residues Cys112 and Cys115. Glu125 provides a ligand contact to substrate. Zn(2+)-binding residues include Cys130 and Cys133. Residue Tyr138 coordinates substrate. In terms of domain architecture, Nudix hydrolase spans Pro139–Tyr262. Residues Ala172, Glu188, and Glu192 each coordinate a divalent metal cation. Positions Gly173–Ala194 match the Nudix box motif. Gln206–Ser213 contacts substrate. An a divalent metal cation-binding site is contributed by Glu233. Ala255 contacts substrate.

This sequence belongs to the Nudix hydrolase family. NudC subfamily. In terms of assembly, homodimer. Mg(2+) serves as cofactor. It depends on Mn(2+) as a cofactor. Requires Zn(2+) as cofactor.

It catalyses the reaction a 5'-end NAD(+)-phospho-ribonucleoside in mRNA + H2O = a 5'-end phospho-adenosine-phospho-ribonucleoside in mRNA + beta-nicotinamide D-ribonucleotide + 2 H(+). The enzyme catalyses NAD(+) + H2O = beta-nicotinamide D-ribonucleotide + AMP + 2 H(+). It carries out the reaction NADH + H2O = reduced beta-nicotinamide D-ribonucleotide + AMP + 2 H(+). In terms of biological role, mRNA decapping enzyme that specifically removes the nicotinamide adenine dinucleotide (NAD) cap from a subset of mRNAs by hydrolyzing the diphosphate linkage to produce nicotinamide mononucleotide (NMN) and 5' monophosphate mRNA. The NAD-cap is present at the 5'-end of some mRNAs and stabilizes RNA against 5'-processing. Has preference for mRNAs with a 5'-end purine. Catalyzes the hydrolysis of a broad range of dinucleotide pyrophosphates. This is NAD-capped RNA hydrolase NudC from Pseudomonas putida (strain ATCC 47054 / DSM 6125 / CFBP 8728 / NCIMB 11950 / KT2440).